The chain runs to 361 residues: Phospho-N-acetylmuramoyl-pentapeptide-transferase (361 aa).

Transmembrane regions (helical) follow at residues 25–45 (RGIL…PAVI), 73–93 (TMGG…WGDL), 98–118 (VWLV…DDWI), 139–159 (IFGL…AAIT), 168–188 (IALP…IVGF), 200–220 (GLAI…AYAS), 237–257 (AGEL…FLWF), 264–284 (VFMG…IAVI), 289–309 (MVLV…IIQV), and 339–359 (VIVR…ATLK).

Belongs to the glycosyltransferase 4 family. MraY subfamily. Mg(2+) serves as cofactor.

It is found in the cell inner membrane. The enzyme catalyses UDP-N-acetyl-alpha-D-muramoyl-L-alanyl-gamma-D-glutamyl-meso-2,6-diaminopimeloyl-D-alanyl-D-alanine + di-trans,octa-cis-undecaprenyl phosphate = di-trans,octa-cis-undecaprenyl diphospho-N-acetyl-alpha-D-muramoyl-L-alanyl-D-glutamyl-meso-2,6-diaminopimeloyl-D-alanyl-D-alanine + UMP. The protein operates within cell wall biogenesis; peptidoglycan biosynthesis. Functionally, catalyzes the initial step of the lipid cycle reactions in the biosynthesis of the cell wall peptidoglycan: transfers peptidoglycan precursor phospho-MurNAc-pentapeptide from UDP-MurNAc-pentapeptide onto the lipid carrier undecaprenyl phosphate, yielding undecaprenyl-pyrophosphoryl-MurNAc-pentapeptide, known as lipid I. The chain is Phospho-N-acetylmuramoyl-pentapeptide-transferase from Xanthomonas oryzae pv. oryzae (strain PXO99A).